Reading from the N-terminus, the 308-residue chain is Cilia- and flagella-associated protein 73 (308 aa).

2 coiled-coil regions span residues 103-134 (RIQK…LEKN) and 164-227 (LSAT…QEAK).

It belongs to the CFAP73 family. Interacts with FAP100; form the modifier of inner arm (MIA) complex.

The protein resides in the cytoplasm. It localises to the cytoskeleton. Its subcellular location is the flagellum axoneme. Functionally, as part of MIA, a complex associated with the outer doublet microtubules of the axoneme, may play a role in ciliary/flagellar motility by regulating the assembly and the activity of inner dynein arm. This Chlamydomonas reinhardtii (Chlamydomonas smithii) protein is Cilia- and flagella-associated protein 73.